Here is a 194-residue protein sequence, read N- to C-terminus: 5'-deoxynucleotidase PBPRA2627 (194 aa).

Residues Arg18–Trp19 and His33 each bind substrate. The region spanning Ile30–Tyr142 is the HD domain. A divalent metal cation contacts are provided by His33, His68, and Asp69. Residues Asp69, Asp77–Thr80, and Asp137 contribute to the substrate site. Asp137 contacts a divalent metal cation.

Belongs to the 5DNU family. As to quaternary structure, homodimer. A divalent metal cation serves as cofactor.

It is found in the cytoplasm. It carries out the reaction a 2'-deoxyribonucleoside 5'-phosphate + H2O = a 2'-deoxyribonucleoside + phosphate. Functionally, catalyzes the strictly specific dephosphorylation of 2'-deoxyribonucleoside 5'-monophosphates. This chain is 5'-deoxynucleotidase PBPRA2627, found in Photobacterium profundum (strain SS9).